Here is a 142-residue protein sequence, read N- to C-terminus: Transcription antitermination protein NusB (142 aa).

The protein belongs to the NusB family.

Involved in transcription antitermination. Required for transcription of ribosomal RNA (rRNA) genes. Binds specifically to the boxA antiterminator sequence of the ribosomal RNA (rrn) operons. The polypeptide is Transcription antitermination protein NusB (Actinobacillus succinogenes (strain ATCC 55618 / DSM 22257 / CCUG 43843 / 130Z)).